The following is a 186-amino-acid chain: dCTP deaminase (186 aa).

107–112 (KSTYAR) contributes to the dCTP binding site. The active-site Proton donor/acceptor is Glu-133. Residues Gln-152, Tyr-166, and Gln-176 each contribute to the dCTP site.

It belongs to the dCTP deaminase family. In terms of assembly, homotrimer.

The catalysed reaction is dCTP + H2O + H(+) = dUTP + NH4(+). It functions in the pathway pyrimidine metabolism; dUMP biosynthesis; dUMP from dCTP (dUTP route): step 1/2. Catalyzes the deamination of dCTP to dUTP. The protein is dCTP deaminase of Campylobacter concisus (strain 13826).